The sequence spans 243 residues: Lipid II isoglutaminyl synthase (glutamine-hydrolyzing) subunit GatD (243 aa).

Residues 6–197 enclose the GATase cobBQ-type domain; it reads IYHFMSDKLN…LHGPILPKNY (192 aa). Cysteine 94 (nucleophile) is an active-site residue. Arginine 128 contacts substrate. The active site involves histidine 189.

This sequence belongs to the CobB/CobQ family. GatD subfamily. As to quaternary structure, forms a heterodimer with MurT.

It catalyses the reaction beta-D-GlcNAc-(1-&gt;4)-Mur2Ac(oyl-L-Ala-gamma-D-Glu-L-Lys-D-Ala-D-Ala)-di-trans,octa-cis-undecaprenyl diphosphate + L-glutamine + ATP + H2O = beta-D-GlcNAc-(1-&gt;4)-Mur2Ac(oyl-L-Ala-D-isoglutaminyl-L-Lys-D-Ala-D-Ala)-di-trans,octa-cis-undecaprenyl diphosphate + L-glutamate + ADP + phosphate + H(+). The enzyme catalyses L-glutamine + H2O = L-glutamate + NH4(+). It functions in the pathway cell wall biogenesis; peptidoglycan biosynthesis. The lipid II isoglutaminyl synthase complex catalyzes the formation of alpha-D-isoglutamine in the cell wall lipid II stem peptide. The GatD subunit catalyzes the hydrolysis of glutamine to glutamate and ammonia. The resulting ammonia molecule is channeled to the active site of MurT. This chain is Lipid II isoglutaminyl synthase (glutamine-hydrolyzing) subunit GatD, found in Staphylococcus aureus (strain N315).